Consider the following 299-residue polypeptide: Protein NSG2 (299 aa).

Residues 1–108 (MANRGEPDPK…PSRTRQTRQN (108 aa)) lie on the Cytoplasmic side of the membrane. Serine 90 carries the post-translational modification Phosphoserine. A helical transmembrane segment spans residues 109–129 (ILHYLQAVLILSLSGFAYHEL). The Lumenal portion of the chain corresponds to 130 to 161 (SRNLHDNHLLHPDFASRPLLLGVKLCNWLSNG). Residues 162 to 182 (VLPNWLGYGVEGLLFGSVVPI) form a helical membrane-spanning segment. Topologically, residues 183–237 (LDNIFQTEVVKSSVHHDSLTSVIRSINAMLGVTFGIRKIQWNSSLQAAGAWGLLN) are cytoplasmic. A helical membrane pass occupies residues 238 to 258 (IILWLFFDGSISMLMSCICIG). The Lumenal portion of the chain corresponds to 259–268 (VGCCISCYKD). Residues 269 to 289 (IIDGSQFLYFMDFYFLGSLMF) form a helical membrane-spanning segment. Over 290–299 (GKLGRYLYSH) the chain is Cytoplasmic.

It belongs to the INSIG family.

The protein localises to the endoplasmic reticulum membrane. Functionally, stabilizes the HMG-CoA reductase HMG2 by preventing its HRD1-dependent degradation. Binds directly to the sterol-sensing domain (SSD)-containing transmembrane region of HMG2, promoting its folding to protect it from degradation. In Saccharomyces cerevisiae (strain ATCC 204508 / S288c) (Baker's yeast), this protein is Protein NSG2 (NSG2).